Here is a 497-residue protein sequence, read N- to C-terminus: Serine hydroxymethyltransferase (497 aa).

(6S)-5,6,7,8-tetrahydrofolate-binding positions include Leu176 and 180–182; that span reads GHL. An N6-(pyridoxal phosphate)lysine modification is found at Lys289.

Belongs to the SHMT family. Homodimer. Pyridoxal 5'-phosphate is required as a cofactor.

It localises to the cytoplasm. It carries out the reaction (6R)-5,10-methylene-5,6,7,8-tetrahydrofolate + glycine + H2O = (6S)-5,6,7,8-tetrahydrofolate + L-serine. It participates in one-carbon metabolism; tetrahydrofolate interconversion. The protein operates within amino-acid biosynthesis; glycine biosynthesis; glycine from L-serine: step 1/1. Catalyzes the reversible interconversion of serine and glycine with tetrahydrofolate (THF) serving as the one-carbon carrier. This reaction serves as the major source of one-carbon groups required for the biosynthesis of purines, thymidylate, methionine, and other important biomolecules. Also exhibits THF-independent aldolase activity toward beta-hydroxyamino acids, producing glycine and aldehydes, via a retro-aldol mechanism. The protein is Serine hydroxymethyltransferase of Chlamydia caviae (strain ATCC VR-813 / DSM 19441 / 03DC25 / GPIC) (Chlamydophila caviae).